Consider the following 323-residue polypeptide: tRNA-dihydrouridine(16) synthase (323 aa).

FMN is bound by residues 7–9 (PME) and Q68. The active-site Proton donor is the C98. FMN is bound by residues K139, 199–201 (NGE), and 223–224 (GR).

It belongs to the Dus family. DusC subfamily. Requires FMN as cofactor.

The enzyme catalyses 5,6-dihydrouridine(16) in tRNA + NADP(+) = uridine(16) in tRNA + NADPH + H(+). It carries out the reaction 5,6-dihydrouridine(16) in tRNA + NAD(+) = uridine(16) in tRNA + NADH + H(+). Its function is as follows. Catalyzes the synthesis of 5,6-dihydrouridine (D), a modified base found in the D-loop of most tRNAs, via the reduction of the C5-C6 double bond in target uridines. Specifically modifies U16 in tRNAs. This is tRNA-dihydrouridine(16) synthase from Pseudomonas putida (strain ATCC 47054 / DSM 6125 / CFBP 8728 / NCIMB 11950 / KT2440).